Reading from the N-terminus, the 437-residue chain is Protein translocase subunit SecY (437 aa).

A run of 10 helical transmembrane segments spans residues 19-39 (LFTLGIIVIYRLGAHIPAPGV), 68-88 (LLQITIFALGIMPYITASIIL), 121-141 (VALAILQGTGLVATARSGALF), 156-176 (IFTTIIMVLTMTAGTPPVMWL), 188-208 (GMSIPMFISIAATFPGALWAI), 218-238 (WIEFGTVILIGFVMVALVVFV), 274-294 (GVIPVIFASSLLYIPALIVQF), 317-337 (YIATYFVLIVFFAFFYVAISF), 378-398 (SLYLGLIALVPTMALAGFGGA), and 400-420 (QNFPFGGTSILIIVGVGLETV).

The protein belongs to the SecY/SEC61-alpha family. As to quaternary structure, component of the Sec protein translocase complex. Heterotrimer consisting of SecY, SecE and SecG subunits. The heterotrimers can form oligomers, although 1 heterotrimer is thought to be able to translocate proteins. Interacts with the ribosome. Interacts with SecDF, and other proteins may be involved. Interacts with SecA.

It localises to the cell membrane. In terms of biological role, the central subunit of the protein translocation channel SecYEG. Consists of two halves formed by TMs 1-5 and 6-10. These two domains form a lateral gate at the front which open onto the bilayer between TMs 2 and 7, and are clamped together by SecE at the back. The channel is closed by both a pore ring composed of hydrophobic SecY resides and a short helix (helix 2A) on the extracellular side of the membrane which forms a plug. The plug probably moves laterally to allow the channel to open. The ring and the pore may move independently. This is Protein translocase subunit SecY from Streptomyces griseus.